The chain runs to 563 residues: MASGDNVDYEAVMVDEFDALNIEVRVSAGPSSSVPGAALSAPRCPGMRALPLKAPVMSTPVPAAAPLPTPPAVDDGPSAVGVGNVPPAVDDVPSAVDDVVIQKETTKYSAKLHAAKVADELKASAGLVFLPGEPSRTYEYSDMGPAFSSNAATSSTSPASTSLTPRKVLYNGRVPSIKDVLAASDVDEVRHMQDLPAFLHAYAHQHDKATVYLLDASQSHPALVDNARVHIDTAALRPAMDEARVTKTAHEIALIREANAVSSAAHRAVMRHIRRFASERQVAALFTAECTVRGAPTQAYAPIAGSGPNAATLHYGANDEPLAGRHVLVLDAGCEVNCYASDVTRTLPLGPTGHFTPEARHIYDLVERMQEACVAAVAPGLLYYSLHLKASAIALRGLLRLGILKGDEKAIWAAGTVAAFFPHGLGHHIGLETHDVTGRDRLLLAAGEREPRAKRDAVSAEMLVGLAAAVATGPPYRGKQMLRPGMVVTVEPGIYFNKDYIEGYFLREDKHRAFIDRDVLARYYPVGGVRIEDCILVTDDGYENLTKAPKGEDMLRIIRGEAQ.

Mn(2+) contacts are provided by D331, D342, E491, and E532.

This sequence belongs to the peptidase M24B family. It depends on Mn(2+) as a cofactor.

It catalyses the reaction Release of any N-terminal amino acid, including proline, that is linked to proline, even from a dipeptide or tripeptide.. Functionally, catalyzes the removal of a penultimate prolyl residue from the N-termini of peptides. In Verticillium alfalfae (strain VaMs.102 / ATCC MYA-4576 / FGSC 10136) (Verticillium wilt of alfalfa), this protein is Probable Xaa-Pro aminopeptidase PEPP (PEPP).